The following is an 869-amino-acid chain: Serendipity locus protein H-1 (869 aa).

Residues 1–17 (MEGGKGEGKRMKEEAPS) show a composition bias toward basic and acidic residues. 2 disordered regions span residues 1–32 (MEGGKGEGKRMKEEAPSKKLPPKIYGGDAGTP) and 134–165 (FSVTFLRPEPPNAFTNSPFKKTSSSGTSTPVK). A compositionally biased stretch (polar residues) spans 146–164 (AFTNSPFKKTSSSGTSTPV). 8 C2H2-type zinc fingers span residues 269–293 (HKCLDCNGLLLETPDEVAKHEAAAH), 299–321 (YRCSECQREFELLAGLKKHLKTH), 331–352 (KKCPDCGKCLKLGSMWMHRKIH), 358–380 (YQCDICGQKFVQKINLTHHARIH), 386–408 (YECPECQKRFQERSHLQRHQKYH), 414–436 (YRCEKCGKMYKTERCLKVHNLVH), 442–464 (FACTVCDKSFISNSKLKQHSNIH), and 470–493 (FKCNYCPRDFTNFPNWLKHTRRRH). 2 disordered regions span residues 554-573 (TSTAAPAPAKQARKKKQPQQ) and 617-652 (PKQTKAKRERKQLAPKQLQQKPQLLQQGQPQQSSLE). A compositionally biased stretch (low complexity) spans 630–648 (APKQLQQKPQLLQQGQPQQ).

Distribution varies between nurse cells and the oocyte during oogenesis. Weakly expressed in follicle and border cells.

The protein resides in the nucleus. Its function is as follows. May belong to a complex set of multifingered proteins which play an important role in gene activation or regulation at early embryonic stages through a maximal accumulation of their transcripts (or protein product) in the mature oocyte. The polypeptide is Serendipity locus protein H-1 (wdn) (Drosophila melanogaster (Fruit fly)).